The primary structure comprises 875 residues: MSKIKISDLAKEFGMTWKELAGEIEELTGKTVKSPSTKIDEEIVSLLRDVLQPAEEVEEAVEKKVEKEKGYRIFELSHDWNIPFEELAEDLKAIGYTKSIDNFTILDEETVNRLKDYIKEKKEKEKEKKKEEKEEKKVKVEKKVEEKPVEVKKEEKKEEKVEKVEKKEEKVQKKPEKKEVKRKEKIVAKEEKPERKKAVEEKPKKKEVKEVKKVEKPKVEVVEEKEETKIKIPEAEIRKETKEEKAELEALRKLMGPQPKKKKKKKKKKEEEKAPVETKEKEEELKIAIIPEVVTVRELSDILDMPVNEIMAELLKRGILATVNQTIDPEIALQIAEEHGYLAEIQKEGEEVKIVEELPQEEKKKLLGEEEEEEENLVERPPVVTVMGHVDHGKTTLLDTIRKTDVAAKEKGGITQHIGAYKIKLSNGKEITFLDTPGHEAFTTLRARGSKVADIAVLVVAADDGVKPQTVEAINHAKSAGVPIIVAINKIDKPGADPERVKRELAQYELIPEEWGGDTIMVPVSAKTGQNVEELLENILLVSEILELKANPNRPAIGTIIESKLDPKRGPVATVLIENGTLHQGDYFVAGFTWGKVRAMFDERGRQVKEATPGTPVEVLGFNEVPQAGDKFVVKPSEREARLLAEQRKQKYEEELQAKRTRIHLENLKDVKEINIILKADVQGSLEAITKSIEELSEKFEDVTINIIHSGIGAITESDVMLAAASNALIIGFNVRPDASARKAAEEEDVDIKIYGIIYDLIDDLEKALKGMLTPKEREVLLGICEVKQIFRIKGVGTVAGCMVTEGVIRRNAKARLVRDGVVIYDGEITSLKRFKEDVKEVAKGYECGLMLKDFNDIKPGDQIEAYEIVQEKAE.

Disordered stretches follow at residues 123 to 204 (EKEK…EKPK) and 240 to 278 (ETKE…PVET). Positions 240 to 252 (ETKEEKAELEALR) are enriched in basic and acidic residues. Residues 259–268 (PKKKKKKKKK) are compositionally biased toward basic residues. Basic and acidic residues predominate over residues 269–278 (KEEEKAPVET). A tr-type G domain is found at 379 to 547 (ERPPVVTVMG…NILLVSEILE (169 aa)). The interval 388 to 395 (GHVDHGKT) is G1. Residue 388–395 (GHVDHGKT) participates in GTP binding. Residues 413–417 (GITQH) are G2. The G3 stretch occupies residues 435 to 438 (DTPG). GTP is bound by residues 435–439 (DTPGH) and 489–492 (NKID). Residues 489–492 (NKID) are G4. A G5 region spans residues 525 to 527 (SAK).

Belongs to the TRAFAC class translation factor GTPase superfamily. Classic translation factor GTPase family. IF-2 subfamily.

It localises to the cytoplasm. Functionally, one of the essential components for the initiation of protein synthesis. Protects formylmethionyl-tRNA from spontaneous hydrolysis and promotes its binding to the 30S ribosomal subunits. Also involved in the hydrolysis of GTP during the formation of the 70S ribosomal complex. In Persephonella marina (strain DSM 14350 / EX-H1), this protein is Translation initiation factor IF-2.